The primary structure comprises 231 residues: Axial regulator YABBY 4 (231 aa).

The C4-type zinc-finger motif lies at 26 to 53; sequence CGFCTTILLVSVPFTSLSMVVTVRCGHC. 2 disordered regions span residues 98–120 and 211–231; these read KVNQ…EDED and NNGF…SPFE.

This sequence belongs to the YABBY family. In terms of assembly, interacts with SPL/NZZ.

The protein localises to the nucleus. Essential for the formation and the abaxial-adaxial asymmetric growth of the ovule outer integument. In Arabidopsis thaliana (Mouse-ear cress), this protein is Axial regulator YABBY 4 (YAB4).